Reading from the N-terminus, the 162-residue chain is Caveolin-2 (162 aa).

Residues 1–86 are Cytoplasmic-facing; the sequence is MGLETEKADV…FEVSKYVIYK (86 aa). Tyr-19 carries the phosphotyrosine; by SRC modification. 2 positions are modified to phosphoserine: Ser-20 and Ser-23. Phosphotyrosine; by SRC is present on Tyr-27. Residues 87–107 constitute an intramembrane region (helical); it reads FLTLFLAIPLAFAAGILFATL. At 108 to 162 the chain is on the cytoplasmic side; that stretch reads SCLHIWIVMPFVKTCLMVLPSVQTIWKSVTDVVIAPLCASVGRSFSSVSMQLSRD.

The protein belongs to the caveolin family. Monomer or homodimer. Interacts with CAV1; the interaction forms a stable heterooligomeric complex that is required for targeting to lipid rafts and for caveolae formation. Tyrosine phosphorylated forms do not form heterooligomers with the Tyr-19-phosphorylated form existing as a monomer or dimer, and the Tyr-27-form as a monomer only. Interacts (tyrosine phosphorylated form) with the SH2 domain-containing proteins, RASA1, NCK1 and SRC. Interacts (tyrosine phosphorylated form) with INSR, the interaction (Tyr-27-phosphorylated form) is increased on insulin stimulation. Interacts (Tyr-19 phosphorylated form) with MAPK1 (phosphorylated form); the interaction, promoted by insulin, leads to nuclear location and MAPK1 activation. Interacts with STAT3; the interaction is increased on insulin-induced tyrosine phosphorylation leading to STAT activation. Phosphorylated on serine and tyrosine residues. CAV1 promotes phosphorylation on Ser-23 which then targets the complex to the plasma membrane, lipid rafts and caveolae. Phosphorylation on both Tyr-19 and Tyr-27 is required for insulin-induced 'Ser-727' phosphorylation of STAT3 and its activation. Phosphorylation on Tyr-19 is required for insulin-induced phosphorylation of MAPK1 and DNA binding of STAT3. Tyrosine phosphorylation is induced by both EGF and insulin.

The protein localises to the nucleus. Its subcellular location is the cytoplasm. The protein resides in the golgi apparatus membrane. It is found in the cell membrane. It localises to the membrane. The protein localises to the caveola. Functionally, may act as a scaffolding protein within caveolar membranes. Interacts directly with G-protein alpha subunits and can functionally regulate their activity. Acts as an accessory protein in conjunction with CAV1 in targeting to lipid rafts and driving caveolae formation. Positive regulator of cellular mitogenesis of the MAPK signaling pathway. Required for the insulin-stimulated nuclear translocation and activation of MAPK1 and STAT3, and the subsequent regulation of cell cycle progression. The chain is Caveolin-2 (CAV2) from Rhinolophus ferrumequinum (Greater horseshoe bat).